The sequence spans 538 residues: Putative outer membrane porin BglH (538 aa).

Residues Met1 to Ala25 form the signal peptide. A disordered region spans residues Lys52 to Thr82. Polar residues predominate over residues Ala62 to Gln73.

This sequence belongs to the porin LamB (TC 1.B.3) family.

It localises to the cell outer membrane. May be a sugar porin with a broad carbohydrate specificity. In Escherichia coli O139:H28 (strain E24377A / ETEC), this protein is Putative outer membrane porin BglH (bglH).